The primary structure comprises 417 residues: RH-like protein IC (417 aa).

11 helical membrane passes run 12–32 (CLPL…YFFT), 44–64 (LVAS…GFGF), 77–97 (VAFN…LDGF), 125–145 (ISAG…MVLV), 172–192 (FYVF…KPLP), 203–223 (TIPS…WPSF), 238–258 (VFNT…VSSL), 265–285 (INMT…GTSC), 287–307 (LITS…ISIG), 331–351 (NFSL…VLHT), and 358–378 (MVGF…AIAV).

Belongs to the ammonium transporter (TC 2.A.49) family. Rh subfamily.

The protein resides in the membrane. Its function is as follows. May be part of an oligomeric complex which is likely to have a transport or channel function in the erythrocyte membrane. In Gorilla gorilla gorilla (Western lowland gorilla), this protein is RH-like protein IC.